We begin with the raw amino-acid sequence, 346 residues long: Serpentine receptor class gamma-20 (346 aa).

The next 7 helical transmembrane spans lie at 27–47, 69–89, 106–128, 157–177, 212–232, 254–274, and 279–299; these read VMLS…SAVL, FFVL…IEVL, PFFF…CLAF, ILAP…WNIL, IPCL…LTML, TMLF…LPGI, and LLIS…ALIL.

The protein belongs to the nematode receptor-like protein srg family.

Its subcellular location is the membrane. This chain is Serpentine receptor class gamma-20 (srg-20), found in Caenorhabditis elegans.